The following is a 282-amino-acid chain: 2-dehydro-3-deoxyphosphooctonate aldolase (282 aa).

Belongs to the KdsA family.

It is found in the cytoplasm. The catalysed reaction is D-arabinose 5-phosphate + phosphoenolpyruvate + H2O = 3-deoxy-alpha-D-manno-2-octulosonate-8-phosphate + phosphate. The protein operates within carbohydrate biosynthesis; 3-deoxy-D-manno-octulosonate biosynthesis; 3-deoxy-D-manno-octulosonate from D-ribulose 5-phosphate: step 2/3. It functions in the pathway bacterial outer membrane biogenesis; lipopolysaccharide biosynthesis. In Shewanella sp. (strain ANA-3), this protein is 2-dehydro-3-deoxyphosphooctonate aldolase.